The sequence spans 217 residues: THAP domain-containing protein 2 (217 aa).

The segment at 1-80 (MPTNCAAAGC…LKMDAVPTIF (80 aa)) adopts a THAP-type zinc-finger fold. The HCFC1-binding motif (HBM) signature appears at 122–125 (EHSY).

This Mus musculus (Mouse) protein is THAP domain-containing protein 2 (Thap2).